The following is a 138-amino-acid chain: Regulator of ribonuclease activity B (138 aa).

The tract at residues 111–138 (WGTYFEDPNGEEGDDDDYVDEDDDGVRH) is disordered. The segment covering 118–138 (PNGEEGDDDDYVDEDDDGVRH) has biased composition (acidic residues).

The protein belongs to the RraB family. As to quaternary structure, interacts with the C-terminal region of Rne.

It is found in the cytoplasm. Its function is as follows. Globally modulates RNA abundance by binding to RNase E (Rne) and regulating its endonucleolytic activity. Can modulate Rne action in a substrate-dependent manner by altering the composition of the degradosome. This is Regulator of ribonuclease activity B from Salmonella typhi.